Reading from the N-terminus, the 577-residue chain is Sulfite reductase [NADPH] hemoprotein beta-component (577 aa).

[4Fe-4S] cluster is bound by residues Cys-436, Cys-442, Cys-481, and Cys-485. Cys-485 contacts siroheme.

Belongs to the nitrite and sulfite reductase 4Fe-4S domain family. In terms of assembly, alpha(8)-beta(8). The alpha component is a flavoprotein, the beta component is a hemoprotein. Requires siroheme as cofactor. [4Fe-4S] cluster is required as a cofactor.

It catalyses the reaction hydrogen sulfide + 3 NADP(+) + 3 H2O = sulfite + 3 NADPH + 4 H(+). The protein operates within sulfur metabolism; hydrogen sulfide biosynthesis; hydrogen sulfide from sulfite (NADPH route): step 1/1. Its function is as follows. Component of the sulfite reductase complex that catalyzes the 6-electron reduction of sulfite to sulfide. This is one of several activities required for the biosynthesis of L-cysteine from sulfate. The protein is Sulfite reductase [NADPH] hemoprotein beta-component of Shewanella woodyi (strain ATCC 51908 / MS32).